Reading from the N-terminus, the 478-residue chain is Vitronectin (478 aa).

An N-terminal signal peptide occupies residues 1–19 (MAPLRPFFILALVAWVSLA). In terms of domain architecture, SMB spans 20–63 (DQESCKGRCTQGFMASKKCQCDELCTYYQSCCADYMEQCKPQVT). Disulfide bonds link cysteine 24–cysteine 28, cysteine 24–cysteine 40, cysteine 28–cysteine 58, cysteine 38–cysteine 40, cysteine 38–cysteine 51, cysteine 44–cysteine 50, and cysteine 51–cysteine 58. A Cell attachment site motif is present at residues 64–66 (RGD). Threonine 69 is modified (phosphothreonine). A sulfotyrosine mark is found at tyrosine 75, tyrosine 78, and tyrosine 80. Positions 82 to 153 (EEPKNNTNTG…QGTPEFPEEE (72 aa)) are disordered. An N-linked (GlcNAc...) asparagine glycan is attached at asparagine 86. Residues 86–99 (NNTNTGVQPENTSP) are compositionally biased toward polar residues. Over residues 131 to 141 (EQQEEILRPDT) the composition is skewed to basic and acidic residues. Hemopexin repeat units lie at residues 157–201 (GKPF…VWGI), 202–249 (EGPI…FSGI), and 250–304 (PDNV…FEHF). Residues asparagine 168 and asparagine 241 are each glycosylated (N-linked (GlcNAc...) asparagine). Tyrosine 278 and tyrosine 281 each carry sulfotyrosine. Cysteine 292 and cysteine 431 are oxidised to a cystine. A phosphoserine mark is found at serine 311 and serine 362. Residues 359-395 (LSHSAQAKKQKSKRRSRKRYRSRRGRGHRRSQSSNSR) form a disordered region. Over residues 364–389 (QAKKQKSKRRSRKRYRSRRGRGHRRS) the composition is skewed to basic residues. The segment at 366–399 (KKQKSKRRSRKRYRSRRGRGHRRSQSSNSRRSSR) is heparin-binding. Serine 398 carries the post-translational modification Phosphoserine; by PKA. Residues tyrosine 416, tyrosine 419, and tyrosine 421 each carry the sulfotyrosine modification. One copy of the Hemopexin 4 repeat lies at 420 to 473 (DYDMDWLVPATCEPIQSVYFFSGDKYYRVNLRTRRVDSVNPPYPRSIAQYWLGC).

As to quaternary structure, interacts with SERPINE1/PAI1, insulin and C1QBP. Post-translationally, sulfated on tyrosine residues. In terms of processing, N- and O-glycosylated. It has been suggested that the active SMB domain may be permitted considerable disulfide bond heterogeneity or variability, thus two alternate disulfide patterns based on 3D structures are described with 1 disulfide bond conserved in both. In terms of tissue distribution, plasma.

It is found in the secreted. The protein resides in the extracellular space. Its function is as follows. Vitronectin is a cell adhesion and spreading factor found in serum and tissues. Vitronectin interact with glycosaminoglycans and proteoglycans. Is recognized by certain members of the integrin family and serves as a cell-to-substrate adhesion molecule. Inhibitor of the membrane-damaging effect of the terminal cytolytic complement pathway. The chain is Vitronectin (Vtn) from Mus musculus (Mouse).